The primary structure comprises 217 residues: Probable transaldolase (217 aa).

Lys83 serves as the catalytic Schiff-base intermediate with substrate.

Belongs to the transaldolase family. Type 3B subfamily.

The protein localises to the cytoplasm. It catalyses the reaction D-sedoheptulose 7-phosphate + D-glyceraldehyde 3-phosphate = D-erythrose 4-phosphate + beta-D-fructose 6-phosphate. Its pathway is carbohydrate degradation; pentose phosphate pathway; D-glyceraldehyde 3-phosphate and beta-D-fructose 6-phosphate from D-ribose 5-phosphate and D-xylulose 5-phosphate (non-oxidative stage): step 2/3. In terms of biological role, transaldolase is important for the balance of metabolites in the pentose-phosphate pathway. The chain is Probable transaldolase from Brucella abortus (strain S19).